The chain runs to 197 residues: UPF0314 protein R03235 (197 aa).

2 helical membrane-spanning segments follow: residues 16 to 36 (ALWL…QHLM) and 152 to 172 (LPVA…GYMV).

This sequence belongs to the UPF0314 family.

Its subcellular location is the cell membrane. The protein is UPF0314 protein R03235 of Rhizobium meliloti (strain 1021) (Ensifer meliloti).